We begin with the raw amino-acid sequence, 305 residues long: MEFAGKRLKGLIAATFTPMTSNSDINLPVIKQYVDYLVQKQHVRNIFVNGTTGEGMSLSVQERKCLAEEWVKQARGKMDNVIIHVGCLSLSDSKDLAAHAASCGADAISIVCPSFLKPSSLDALVLYMKEVAFAAPSLPFYYYHIPRLTGTTYQICELLRKAKENIPSFRGVKFTDVNLMDFGLCVSQYKEFDCLYGVDEQLLGALAFGAHGAVGSTYNYLGKKNGDMMAAFEGGNLQEARKIQCSLQEFLLFVFDMGWGLPEFKDIMSQISGIPLGPPRLPLYSSVKSDHHDSIRTKMLKLDLI.

Aceneuramate-binding residues include threonine 51 and threonine 52. The Proton donor role is filled by tyrosine 143. Lysine 173 functions as the Schiff-base intermediate with substrate in the catalytic mechanism. Residues threonine 175, glycine 197, aspartate 199, glutamate 200, and serine 216 each coordinate aceneuramate.

This sequence belongs to the DapA family. NanA subfamily. Homotetramer.

It localises to the cytoplasm. The catalysed reaction is aceneuramate = aldehydo-N-acetyl-D-mannosamine + pyruvate. Its pathway is amino-sugar metabolism; N-acetylneuraminate degradation. Functionally, catalyzes the cleavage of N-acetylneuraminic acid (sialic acid) to form pyruvate and N-acetylmannosamine via a Schiff base intermediate. It prevents sialic acids from being recycled and returning to the cell surface. Involved in the N-glycolylneuraminic acid (Neu5Gc) degradation pathway. This is N-acetylneuraminate lyase from Xenopus tropicalis (Western clawed frog).